A 543-amino-acid chain; its full sequence is Sensor histidine kinase DcuS (543 aa).

Over 1–20 (MRHSLPYHILRKRPMKLSTT) the chain is Cytoplasmic. Residues 21 to 41 (VILMVSAVLFSVLLVVHLIYF) form a helical membrane-spanning segment. The Periplasmic portion of the chain corresponds to 42 to 181 (SQISDMTRDG…VTQQINDSRW (140 aa)). (R)-malate contacts are provided by residues 107-110 (RYSH), Lys-121, 140-142 (GFL), and Arg-147. The chain crosses the membrane as a helical span at residues 182 to 202 (SIIWSVLFGMLVGLIGTCILV). Topologically, residues 203 to 543 (KVLKKILFGL…IPWDGERSNR (341 aa)) are cytoplasmic. The PAS domain occupies 212–323 (LEPYEISTLF…IIGAISTFRD (112 aa)). One can recognise a Histidine kinase domain in the interval 346–538 (ERSHEFMNKL…QFFVQIPWDG (193 aa)). His-349 carries the phosphohistidine; by autocatalysis modification.

Homodimer. In terms of processing, autophosphorylated. The phosphoryl group is rapidly transferred to DcuR.

It is found in the cell inner membrane. The catalysed reaction is ATP + protein L-histidine = ADP + protein N-phospho-L-histidine.. Member of the two-component regulatory system DcuR/DcuS. Involved in the C4-dicarboxylate-stimulated regulation of the genes encoding the anaerobic fumarate respiratory system (frdABCD; nuoAN; dcuB; sdhCDAB; etc.). Weakly regulates the aerobic C4-dicarboxylate transporter dctA. Activates DcuR by phosphorylation. This Shigella flexneri protein is Sensor histidine kinase DcuS (dcuS).